A 158-amino-acid chain; its full sequence is Cyclic pyranopterin monophosphate synthase (158 aa).

Substrate-binding positions include 74-76 (MCH) and 112-113 (ME). D127 is a catalytic residue.

The protein belongs to the MoaC family. In terms of assembly, homohexamer; trimer of dimers.

The catalysed reaction is (8S)-3',8-cyclo-7,8-dihydroguanosine 5'-triphosphate = cyclic pyranopterin phosphate + diphosphate. The protein operates within cofactor biosynthesis; molybdopterin biosynthesis. Catalyzes the conversion of (8S)-3',8-cyclo-7,8-dihydroguanosine 5'-triphosphate to cyclic pyranopterin monophosphate (cPMP). In Thermoanaerobacter pseudethanolicus (strain ATCC 33223 / 39E) (Clostridium thermohydrosulfuricum), this protein is Cyclic pyranopterin monophosphate synthase.